A 178-amino-acid polypeptide reads, in one-letter code: ATP-dependent protease subunit HslV (178 aa).

Residue Thr-7 is part of the active site. Na(+) is bound by residues Gly-162, Cys-165, and Thr-168.

This sequence belongs to the peptidase T1B family. HslV subfamily. A double ring-shaped homohexamer of HslV is capped on each side by a ring-shaped HslU homohexamer. The assembly of the HslU/HslV complex is dependent on binding of ATP.

The protein resides in the cytoplasm. It carries out the reaction ATP-dependent cleavage of peptide bonds with broad specificity.. With respect to regulation, allosterically activated by HslU binding. In terms of biological role, protease subunit of a proteasome-like degradation complex believed to be a general protein degrading machinery. The protein is ATP-dependent protease subunit HslV of Leptothrix cholodnii (strain ATCC 51168 / LMG 8142 / SP-6) (Leptothrix discophora (strain SP-6)).